We begin with the raw amino-acid sequence, 310 residues long: MKTLIRKFSRTAITVVLVILAFIAIFNAWVYYTESPWTRDARFSADVVAIAPDVSGLITQVNVHDNQLVKKGQILFTIDQPRYQKALEEAQADVAYYQVLAQEKRQEAGRRNRLGVQAMSREEIDQANNVLQTVLHQLAKAQATRDLAKLDLERTVIRAPADGWVTNLNVYTGEFITRGSTAVALVKQNSFYVLAYMEETKLEGVRPGYRAEITPLGSNKVLKGTVDSVAAGVTNASSTRDDKGMATIDSNLEWVRLAQRVPVRIRLDNQQENIWPAGTTATVVVTGKQDRDESQDSFFRKMAHRLREFG.

A helical membrane pass occupies residues 12–32; it reads AITVVLVILAFIAIFNAWVYY.

This sequence belongs to the membrane fusion protein (MFP) (TC 8.A.1) family.

It localises to the cell inner membrane. Functionally, forms an efflux pump with AaeB. This chain is p-hydroxybenzoic acid efflux pump subunit AaeA, found in Escherichia coli O139:H28 (strain E24377A / ETEC).